An 892-amino-acid chain; its full sequence is Alanine--tRNA ligase (892 aa).

Zn(2+)-binding residues include histidine 596, histidine 600, cysteine 700, and histidine 704.

It belongs to the class-II aminoacyl-tRNA synthetase family. Zn(2+) serves as cofactor.

The protein resides in the cytoplasm. It catalyses the reaction tRNA(Ala) + L-alanine + ATP = L-alanyl-tRNA(Ala) + AMP + diphosphate. In terms of biological role, catalyzes the attachment of alanine to tRNA(Ala) in a two-step reaction: alanine is first activated by ATP to form Ala-AMP and then transferred to the acceptor end of tRNA(Ala). Also edits incorrectly charged Ser-tRNA(Ala) and Gly-tRNA(Ala) via its editing domain. This Methanococcus maripaludis (strain C7 / ATCC BAA-1331) protein is Alanine--tRNA ligase.